The following is a 446-amino-acid chain: Phosphoglucosamine mutase (446 aa).

The active-site Phosphoserine intermediate is the serine 100. Residues serine 100, aspartate 241, aspartate 243, and aspartate 245 each coordinate Mg(2+). Serine 100 bears the Phosphoserine mark.

The protein belongs to the phosphohexose mutase family. Requires Mg(2+) as cofactor. Post-translationally, activated by phosphorylation.

The catalysed reaction is alpha-D-glucosamine 1-phosphate = D-glucosamine 6-phosphate. Catalyzes the conversion of glucosamine-6-phosphate to glucosamine-1-phosphate. This Methylorubrum extorquens (strain CM4 / NCIMB 13688) (Methylobacterium extorquens) protein is Phosphoglucosamine mutase.